The chain runs to 375 residues: 23S rRNA (uracil(747)-C(5))-methyltransferase RlmC (375 aa).

4 residues coordinate [4Fe-4S] cluster: C3, C11, C14, and C87. Residues Q212, F241, E262, and N307 each contribute to the S-adenosyl-L-methionine site. C334 serves as the catalytic Nucleophile.

It belongs to the class I-like SAM-binding methyltransferase superfamily. RNA M5U methyltransferase family. RlmC subfamily.

The enzyme catalyses uridine(747) in 23S rRNA + S-adenosyl-L-methionine = 5-methyluridine(747) in 23S rRNA + S-adenosyl-L-homocysteine + H(+). Its function is as follows. Catalyzes the formation of 5-methyl-uridine at position 747 (m5U747) in 23S rRNA. This Enterobacter sp. (strain 638) protein is 23S rRNA (uracil(747)-C(5))-methyltransferase RlmC.